The following is a 259-amino-acid chain: Expansin-B4 (259 aa).

An N-terminal signal peptide occupies residues 1-23 (MASSQRYFALLALFAVSLKFCYC). A glycan (N-linked (GlcNAc...) asparagine) is linked at N25. An Expansin-like EG45 domain is found at 51–161 (GGACGYGSAV…KRAACLYRGT (111 aa)). 3 disulfides stabilise this stretch: C54/C83, C86/C156, and C91/C97. The 82-residue stretch at 174–255 (YYISFVVEYE…NWKPDESYRS (82 aa)) folds into the Expansin-like CBD domain.

The protein belongs to the expansin family. Expansin B subfamily.

Its subcellular location is the secreted. The protein resides in the cell wall. The protein localises to the membrane. Functionally, may cause loosening and extension of plant cell walls by disrupting non-covalent bonding between cellulose microfibrils and matrix glucans. No enzymatic activity has been found. The polypeptide is Expansin-B4 (EXPB4) (Arabidopsis thaliana (Mouse-ear cress)).